A 324-amino-acid polypeptide reads, in one-letter code: MAPTLKLQCHFILVCLLALRGESRYLELREAVDHDPFPHLAGGASPKRELEGEPLYRRALRCVDMLSLQGQFTFTADRRQLHCATFFIAEPEEFITIHYDLVSIDCLRGDILQVFDGWILKGEKFPSSQDHPLPTTERYVDFCDSGLSRRSIRSSQNVAMIFFRVHEPGNGFTITVKTEPNLFPCNIISQTPNGRFTLVMPHQHRNCSFSIIYPVAIKISDLTLGHLNGLQLKKSSAGCGGIGDFVELLGGTGLDPSKMLLLADLCYPLRGPAQMKVGCDHTVLRMVSSGKHINRVTFEYRQLEPYELENPNGNSIQEFCLSTL.

The N-terminal stretch at 1–23 (MAPTLKLQCHFILVCLLALRGES) is a signal peptide. 5 cysteine pairs are disulfide-bonded: Cys62–Cys83, Cys106–Cys143, Cys185–Cys207, Cys239–Cys266, and Cys279–Cys320. An N-linked (GlcNAc...) asparagine glycan is attached at Asn206.

Belongs to the CRF-binding protein family.

The protein localises to the secreted. Functionally, binds CRF and inactivates it. May prevent inappropriate pituitary-adrenal stimulation in pregnancy. The polypeptide is Corticotropin-releasing factor-binding protein (CRHBP) (Ovis aries (Sheep)).